The sequence spans 38 residues: Beta-defensin 8 (38 aa).

3 disulfides stabilise this stretch: Cys7-Cys36, Cys14-Cys29, and Cys19-Cys37.

The protein belongs to the beta-defensin family. Neutrophilic granules.

The protein localises to the secreted. In terms of biological role, has bactericidal activity. Active against E.coli ML35 and S.aureus 502A. The polypeptide is Beta-defensin 8 (DEFB8) (Bos taurus (Bovine)).